The following is a 27-amino-acid chain: Urumin (27 aa).

As to expression, expressed by the skin glands.

It is found in the secreted. Functionally, amphibian peptide that shows viricidal activity against human H1N1 influenza A virus. It specifically targets the conserved stalk region of H1 hemagglutinin, and acts by actively destroying influenza virions. It shows a reduced activity on human H3N2 influenza A virus and no activity against other viruses (HIV, SIV, HSV-II, hepatitis C, Ebola, Zika, and Dengue viruses). In vivo, the peptide also protects mice infected with mouse-adapted influenza virus from lethal influenza infection. The peptide synthesized in D-amino acids is inactive. The protein is Urumin of Hydrophylax bahuvistara (Wide-spread fungoid frog).